The sequence spans 320 residues: Zinc finger protein 330 (320 aa).

The tract at residues 1–23 (MPKKKTGARKKAENRREREKQLR) is disordered. The Nuclear localization signal signature appears at 3-11 (KKKTGARKK). Over residues 10-22 (KKAENRREREKQL) the composition is skewed to basic and acidic residues. 4 consecutive C4-type zinc fingers follow at residues 42-58 (CDKCQRRQKNRAFCYFC), 67-104 (CAQCGKTKCMMKSSDCVIKHAGVYSTGLAMVGAICDFC), 129-149 (CVECERGVWDHGGRIFSCSFC), and 175-189 (CVSCNRLGQHSCLRC). Disordered stretches follow at residues 206-250 (EKGK…ASGY) and 264-303 (GASYHDEEEDEYEAEDDEEEEDEGGKDSDAESSDLFTNLN). Residues 216–225 (CGHETQETKD) show a composition bias toward basic and acidic residues. Over residues 269-287 (DEEEDEYEAEDDEEEEDEG) the composition is skewed to acidic residues. Phosphoserine is present on S291.

Belongs to the NOA36 family.

It localises to the nucleus. It is found in the nucleolus. The protein resides in the chromosome. The protein localises to the centromere. The chain is Zinc finger protein 330 (ZNF330) from Bos taurus (Bovine).